The primary structure comprises 144 residues: 3-dehydroquinate dehydratase (144 aa).

The active-site Proton acceptor is Tyr-24. Asn-73, His-79, and Asp-86 together coordinate substrate. The active-site Proton donor is the His-99. Residues 100 to 101 (LS) and Arg-110 each bind substrate.

This sequence belongs to the type-II 3-dehydroquinase family. In terms of assembly, homododecamer.

The enzyme catalyses 3-dehydroquinate = 3-dehydroshikimate + H2O. It functions in the pathway metabolic intermediate biosynthesis; chorismate biosynthesis; chorismate from D-erythrose 4-phosphate and phosphoenolpyruvate: step 3/7. Functionally, catalyzes a trans-dehydration via an enolate intermediate. In Shewanella sp. (strain MR-4), this protein is 3-dehydroquinate dehydratase.